The chain runs to 161 residues: Allophycocyanin beta chain (161 aa).

Asn71 is subject to N4-methylasparagine. Residue Cys81 participates in (2R,3E)-phycocyanobilin binding.

Belongs to the phycobiliprotein family. As to quaternary structure, heterodimer of an alpha and a beta chain. Contains one covalently linked phycocyanobilin chromophore.

The protein localises to the plastid. It is found in the chloroplast thylakoid membrane. Its function is as follows. Light-harvesting photosynthetic bile pigment-protein from the phycobiliprotein complex. Allophycocyanin has a maximum absorption at approximately 650 nanometers. The protein is Allophycocyanin beta chain (apcB) of Pyropia haitanensis (Red seaweed).